Reading from the N-terminus, the 165-residue chain is MALNLQDKQAIVAEVSEVAKGALSAVVADSRGVTVDKMTELRKAGREAGVYMRVVRNTLLRRVVEGTQFECLKDTFVGPTLIAYSMEHPGAAARLFKEFAKANAKFEVKAAAFEGELIPAAQIDRLATLPTYEEALARLMSTMKEAAAGKLVRTLAAVRDAKEAA.

The protein belongs to the universal ribosomal protein uL10 family. Part of the ribosomal stalk of the 50S ribosomal subunit. The N-terminus interacts with L11 and the large rRNA to form the base of the stalk. The C-terminus forms an elongated spine to which L12 dimers bind in a sequential fashion forming a multimeric L10(L12)X complex.

Its function is as follows. Forms part of the ribosomal stalk, playing a central role in the interaction of the ribosome with GTP-bound translation factors. This is Large ribosomal subunit protein uL10 from Pectobacterium carotovorum subsp. carotovorum (strain PC1).